A 123-amino-acid chain; its full sequence is Galectin-2 (123 aa).

A Galectin domain is found at 4–123 (KVEIMNMDMK…LRYLSVQGGF (120 aa)). 65–71 (WGKEQRD) is an a beta-D-galactoside binding site.

Homodimer.

Its function is as follows. This protein binds beta-galactoside. Its physiological function is not yet known. This is Galectin-2 (LGALS2) from Sus scrofa (Pig).